The sequence spans 367 residues: 2-aminoethylphosphonate--pyruvate transaminase (367 aa).

K194 carries the N6-(pyridoxal phosphate)lysine modification.

This sequence belongs to the class-V pyridoxal-phosphate-dependent aminotransferase family. PhnW subfamily. Homodimer. It depends on pyridoxal 5'-phosphate as a cofactor.

The catalysed reaction is (2-aminoethyl)phosphonate + pyruvate = phosphonoacetaldehyde + L-alanine. In terms of biological role, involved in phosphonate degradation. This chain is 2-aminoethylphosphonate--pyruvate transaminase, found in Salmonella schwarzengrund (strain CVM19633).